Here is a 190-residue protein sequence, read N- to C-terminus: Translation initiation factor IF-3 (190 aa).

The protein belongs to the IF-3 family. Monomer.

It is found in the cytoplasm. In terms of biological role, IF-3 binds to the 30S ribosomal subunit and shifts the equilibrium between 70S ribosomes and their 50S and 30S subunits in favor of the free subunits, thus enhancing the availability of 30S subunits on which protein synthesis initiation begins. This chain is Translation initiation factor IF-3, found in Prochlorococcus marinus (strain AS9601).